The chain runs to 505 residues: 4-alpha-glucanotransferase (505 aa).

Belongs to the disproportionating enzyme family.

It localises to the cytoplasm. It catalyses the reaction Transfers a segment of a (1-&gt;4)-alpha-D-glucan to a new position in an acceptor, which may be glucose or a (1-&gt;4)-alpha-D-glucan.. This chain is 4-alpha-glucanotransferase (malQ), found in Streptococcus pneumoniae serotype 4 (strain ATCC BAA-334 / TIGR4).